Here is a 265-residue protein sequence, read N- to C-terminus: Glutamate racemase (265 aa).

Substrate-binding positions include 9 to 10 (DS) and 41 to 42 (YS). Cys73 serves as the catalytic Proton donor/acceptor. 74-75 (NT) contributes to the substrate binding site. Cys184 functions as the Proton donor/acceptor in the catalytic mechanism. Substrate is bound at residue 185–186 (TH).

This sequence belongs to the aspartate/glutamate racemases family.

It carries out the reaction L-glutamate = D-glutamate. It functions in the pathway cell wall biogenesis; peptidoglycan biosynthesis. Its function is as follows. Provides the (R)-glutamate required for cell wall biosynthesis. The polypeptide is Glutamate racemase (Actinobacillus pleuropneumoniae serotype 3 (strain JL03)).